Consider the following 217-residue polypeptide: MQDSSKNKQPCVSWKVSPLKAKAMSPDDVSRLFCKSSTSSATRKHDPFHKLWDRLQPKAQSTIQRTSSLPVPSSSNFKERLNNIGGLKRSRTLESSYEDETETANKLSRVSSLVSVIRQTIDRKKSLERRVREEQEEKTDNEDDNDVEISTQESLENNGLAEKKDDTSSLATLEDDIEGQEFSFDDQDLQMLQDIEDQWLSSQKQQGSPLTSDHISK.

The segment covering 59 to 76 (AQSTIQRTSSLPVPSSSN) has biased composition (polar residues). Disordered stretches follow at residues 59–105 (AQST…ETAN) and 124–217 (KKSL…HISK). Serine 68 is subject to Phosphoserine. Threonine 92 bears the Phosphothreonine mark. Positions 124 to 135 (KKSLERRVREEQ) are enriched in basic and acidic residues. The span at 136–147 (EEKTDNEDDNDV) shows a compositional bias: acidic residues. A compositionally biased stretch (polar residues) spans 148–157 (EISTQESLEN). Acidic residues predominate over residues 173-188 (LEDDIEGQEFSFDDQD). Over residues 199–217 (WLSSQKQQGSPLTSDHISK) the composition is skewed to polar residues.

This is an uncharacterized protein from Schizosaccharomyces pombe (strain 972 / ATCC 24843) (Fission yeast).